A 198-amino-acid chain; its full sequence is Calcium channel flower (198 aa).

The next 3 membrane-spanning stretches (helical) occupy residues 36–56 (LGIV…LSII), 67–89 (IIQM…VCIE), and 114–134 (AVPP…GLIF).

Belongs to the calcium channel flower family. As to quaternary structure, homomultimer. Associates with the dally/ magu complex.

The protein resides in the cell membrane. Its subcellular location is the cytoplasmic vesicle. It localises to the secretory vesicle. The protein localises to the synaptic vesicle membrane. It is found in the presynaptic cell membrane. The protein resides in the endosome. Its activity is regulated as follows. Channel activity is inhibited by La(3+), which reduces Ca(2+) influx and thus inhibits it's function in promoting activity-dependent bulk endocytosis (ADBE) in response to high stimuli. Transmembrane protein which mediates synaptic endocytosis, fitness-based cell culling, neuronal culling, morphogen gradient scaling, and calcium transport. Regulates synaptic endocytosis and hence couples exo- with endocytosis. Controls two major modes of synaptic vesicle (SV) endocytosis in the synaptic boutons of neuromuscular junctions (NMJs); Ca(2+) channel-independent Clathrin-mediated endocytosis (CME) in response to mild stimulation, and Ca(2+) channel-dependent activity-dependent bulk endocytosis (ADBE) in response to strong stimulation. Functions in ADBE and subsequent SV reformation from bulk endosomes by initiating Ca(2+) channel-dependent phosphatidylinositol 4,5-bisphosphate (PtdIns(4,5)P2) compartmentalization in synaptic boutons. There it acts at the periactive zone to provide the low Ca(2+) levels required to initiate Calcineurin activation and upregulate PtdIns(4,5)P2. Conversely PtdIns(4,5)P2 enhances fwe Ca(2+) channel-activity, establishing a positive feedback loop that induces PtdIns(4,5)P2 microdomain at the periactive zone. These microdomains trigger bulk membrane invagination (i.e. ADBE) by triggering actin polymerization while also promoting localization of fwe to bulk endosomes, thereby removing the ADBE trigger to reduce endocytosis and prevent excess membrane uptake. PtdIns(4,5)P2 then promotes SV reformation from the bulk endosomes, to coordinate ADBE and subsequent SV reformation. Different combinations of the flower isoforms at the cell membrane are also required for the identification and elimination of suboptimal or supernumerary cells during development, regeneration, and adulthood. Required for the recognition and elimination of unfit cells in the developing wing during cell competition. In the developing pupal retina, mediates the elimination of unwanted postmitotic neurons, including supernumerary photoreceptor neurons that form at the periphery of the retina and are contained within incomplete ommatidia units. Also required for efficient elimination and replacement of old neurons by newly generated neurons during regeneration in the adult brain following mechanical injury. Downstream of the flower fitness fingerprints, cells identified as unwanted or unfit are eliminated via apoptosis through the expression of ahuizotl (azot). However, the cells marked for elimination by the flower isoforms only undergo apoptosis if additional thresholds are met; (1) their neighboring fit/healthy cells express different levels of the fwe isoforms, and (2) the levels of the protective signal SPARC expressed by the loser or unwanted cells are unable to inhibit caspase activation. These additional thresholds for flower-mediated apoptosis, allows useful cells to recover from transient and limited stress before they are unnecessarily eliminated. Functions with dally and magu in a mechanism of scaling, which utilises apoptosis to ensure that the dpp morphogen gradient, which mediates organ growth, remains proportional to the size of the growing wing. In this mechanism, fwe represses dally- and Magu-dependent activity in expanding the gradient, and dally/Magu inhibits fwe-dependent apoptosis to keep cell death rate low. When the levels of these different proteins are optimally regulated the gradient correctly scales with organ growth but when this fails, fwe-mediated apoptosis is activated to trim the developing tissue to match the correct size of the gradient. This is Calcium channel flower from Drosophila persimilis (Fruit fly).